A 1407-amino-acid polypeptide reads, in one-letter code: Metabotropic glutamate receptor-like protein P (1407 aa).

Topologically, residues 1 to 696 (MKFKKKNIYW…KTIKVTSFVK (696 aa)) are extracellular. N-linked (GlcNAc...) asparagine glycans are attached at residues N43 and N58. PbH1 repeat units follow at residues 93–118 (ISDIHFKDLTIKNGFGNAISGIFDGG) and 129–150 (FVNVALIDNTCSASGGGIFLYN). N162, N179, N182, N230, N241, N270, N368, N391, N464, N512, N539, N544, N554, N571, N627, and N646 each carry an N-linked (GlcNAc...) asparagine glycan. One copy of the PbH1 3 repeat lies at 254-279 (ISNVIFESCEFIGNRANSTGGLSFLT). The PbH1 4 repeat unit spans residues 452–476 (GYSVYIENCEVKNNTGLFKGCFIDT). A helical membrane pass occupies residues 697 to 717 (FLVGTLAAILLIILIISGFIS). The Cytoplasmic segment spans residues 718–731 (LKYRKKRVIRYSNP). A helical membrane pass occupies residues 732–752 (LFLCIILVGCIIFLITIPVLF). Residues 753–758 (GSTSAT) lie on the Extracellular side of the membrane. Residues 759 to 779 (CKIRFPIIVIGSCLVTSSVFI) traverse the membrane as a helical segment. Residues 780–806 (KQFRIWRLIKDIQLLRETNVENKYLLK) lie on the Cytoplasmic side of the membrane. A helical membrane pass occupies residues 807 to 827 (FISILMVIPIIIVICSFFIFP). Residues 828–853 (THEKYTFNQRDITITHYCSDGSYLAY) are Extracellular-facing. The helical transmembrane segment at 854-874 (VIIFLVYQMAILLFGCYLVIV) threads the bilayer. The Cytoplasmic portion of the chain corresponds to 875–890 (CRKFRSIPGTFNEATY). A helical membrane pass occupies residues 891–911 (IGILIYNYTVVLIVAIPLAYV). At 912–919 (FNKNPLAN) the chain is on the extracellular side. The chain crosses the membrane as a helical span at residues 920 to 940 (FLIFSISIIVFVLSTIILLFI). Topologically, residues 941–1407 (PKFHFLLRKK…LSPINLSKRK (467 aa)) are cytoplasmic. A compositionally biased stretch (polar residues) spans 991-1004 (QQRQGNLYNNNSLG). 4 disordered regions span residues 991 to 1072 (QQRQ…DPNF), 1084 to 1248 (GKRK…SSIG), 1267 to 1351 (KKVK…NFNE), and 1369 to 1407 (FHQKKQKDSDNRKNYNISPINISDEKVPPLSPINLSKRK). Residues 1005 to 1029 (RSISSNTRKRSNNNINNNNNNNSFN) show a composition bias toward low complexity. The segment covering 1030 to 1040 (MTGFSDSSSTI) has biased composition (polar residues). Over residues 1041–1071 (SNPNLTSFTSSPSSLNSSSDSDSTPDFNDPN) the composition is skewed to low complexity. Residues 1084–1093 (GKRKSIEKNK) are compositionally biased toward basic and acidic residues. Composition is skewed to low complexity over residues 1099-1147 (PNSP…NTPI), 1154-1246 (SSKT…SDSS), and 1276-1339 (SDST…NNNN). A coiled-coil region spans residues 1315–1344 (NNNNNNNNNNNNNINNNNNNANNNNSDTDD).

This sequence belongs to the G-protein coupled receptor 3 family. GABA-B receptor subfamily.

Its subcellular location is the membrane. The protein is Metabotropic glutamate receptor-like protein P (grlP) of Dictyostelium discoideum (Social amoeba).